The primary structure comprises 403 residues: Lipase lipl-5 (403 aa).

An N-terminal signal peptide occupies residues 1-18 (MWRFAVFLAAFFVQDVVG). Asparagine 64 carries N-linked (GlcNAc...) asparagine glycosylation. Catalysis depends on serine 167, which acts as the Nucleophile. Asparagine 271 carries N-linked (GlcNAc...) asparagine glycosylation. Residues aspartate 343 and histidine 375 each act as charge relay system in the active site.

This sequence belongs to the AB hydrolase superfamily. Lipase family.

The protein resides in the lysosome lumen. The protein localises to the secreted. Its function is as follows. Lipase involved in lipid homeostasis. Regulates mitochondrial lipid composition, in particular cardiolipins and coenzyme Q-9 levels, in response to nutrient availability. Does not affect global triglyceride levels in response to nutrient availability. However, in coelomocytes, specifically promotes triglyceride catabolism and lifespan extension in response to nutrient deprivation. The protein is Lipase lipl-5 of Caenorhabditis elegans.